The sequence spans 217 residues: Aprataxin-like protein (217 aa).

In terms of domain architecture, HIT spans 6-139 (ALKNYVTSPE…HIHVISKDFH (134 aa)). Interaction with DNA stretches follow at residues 34-38 (DSFPK), 121-132 (HSVPSMANLHIH), and 144-148 (KNKKH). Histidine 130 acts as the Nucleophile in catalysis. Residues cysteine 188, cysteine 191, histidine 205, and glutamate 209 each contribute to the Zn(2+) site.

The protein localises to the nucleus. It localises to the cytoplasm. It catalyses the reaction a 5'-end adenosine-5'-diphospho-5'-2'-deoxyribonucleoside-DNA + H2O = a 5'-end 5'-phospho-2'-deoxyribonucleoside-DNA + AMP + 2 H(+). The catalysed reaction is a 5'-end adenosine-5'-diphospho-5'-ribonucleoside-2'-deoxyribonucleotide-DNA + H2O = a 5'-end 5'-phospho-ribonucleoside-2'-deoxyribonucleotide-DNA + AMP + 2 H(+). It carries out the reaction a 3'-end 2'-deoxyribonucleotide-3'-diphospho-5'-guanosine-DNA + H2O = a 3'-end 2'-deoxyribonucleotide 3'-phosphate-DNA + GMP + 2 H(+). In terms of biological role, DNA-binding protein involved in single-strand DNA break repair, double-strand DNA break repair and base excision repair. Resolves abortive DNA ligation intermediates formed either at base excision sites, or when DNA ligases attempt to repair non-ligatable breaks induced by reactive oxygen species. Catalyzes the release of adenylate groups covalently linked to 5'-phosphate termini, resulting in the production of 5'-phosphate termini that can be efficiently rejoined. Likewise, catalyzes the release of 3'-linked guanosine (DNAppG) and inosine (DNAppI) from DNA, but has higher specific activity with 5'-linked adenosine (AppDNA). This is Aprataxin-like protein (HNT3) from Saccharomyces cerevisiae (strain ATCC 204508 / S288c) (Baker's yeast).